Reading from the N-terminus, the 517-residue chain is FAD-dependent monooxygenase dmxR9 (517 aa).

Val-96 and Arg-162 together coordinate FAD. Residues Arg-243 and Tyr-270 contribute to the active site. FAD contacts are provided by Asp-365 and Ala-378.

The protein belongs to the paxM FAD-dependent monooxygenase family. It depends on FAD as a cofactor.

It functions in the pathway secondary metabolite biosynthesis. Its function is as follows. FAD-dependent monooxygenase; part of the gene cluster that mediates the biosynthesis of the dimeric xanthones cryptosporioptides. The pathway begins with the synthesis of atrochrysone thioester by the polyketide synthase dmx-nrPKS. The atrochrysone carboxyl ACP thioesterase dmxR1 then breaks the thioester bond and releases the atrochrysone carboxylic acid from dmx-nrPKS. Atrochrysone carboxylic acid is decarboxylated by the decarboxylase dmxR15, and oxidized by the anthrone oxygenase dmxR16 to yield emodin. Emodin is then reduced to emodin hydroquinone by the oxidoreductase dmxR7. A-ring reduction by the short chain dehydrogenase dmxR18, dehydration by the scytalone dehydratase-like protein dmxR17 and probable spontaneous re-oxidation, results in overall deoxygenation to chrysophanol. Baeyer-Villiger oxidation by the Baeyer-Villiger monooxygenase (BVMO) dmxR6 then yields monodictylactone in equilibrium with monodictyphenone. In the case of the cryptosporioptides biosynthesis, monodictylactone is reduced at C-12 to an alcohol (by the short chain dehydrogenases dmxR12 or dmxR8) and hydroxylated at C-5 by dmxR9, yielding the electron-rich aromatic which could eliminate H(2)O to form the ortho-quinonemethide, followed by tautomerisation to paraquinone and complete the formal reduction to produce the 10-methylgroup. Conjugate addition of C-4a-OH to the resulting paraquinone by the monooxygenase dmxR10 then gives cyclohexadienone, which is then reduced at C-5 by the short chain dehydrogenase dmxR3 to give the dihydroxanthone. The 6,7-epoxide in the cryptosporioptides could be introduced by the cytochrome P450 monooxygenase dmxL3. The highly reducing PKS dmxL2 manufactures butyrate, which is further carboxylated by dmxL1 to form ethylmalonate. It is not yet clear whether the carboxylation occurs while the butyrate is attached to the ACP of dmxL2, but this unusual fungal metabolite could then be esterified to O-5 by the O-acetyltransferase dmxR13. Finally, dimerization performed by dmxR5 gives the observed dimers cryptosporioptides A, B and C as the final products of the pathway. The protein is FAD-dependent monooxygenase dmxR9 of Cryptosporiopsis sp. (strain 8999).